We begin with the raw amino-acid sequence, 1226 residues long: Phosphatidylinositol 3,4,5-trisphosphate 5-phosphatase 2B (1226 aa).

Positions 6–102 (WYHRDISRVR…GLVAPLLYPV (97 aa)) constitute an SH2 domain. The interval 106–144 (SEANDESSDGDDEKPGSTFANSPPRAISPTATSPPSSSA) is disordered. Acidic residues predominate over residues 108-117 (ANDESSDGDD). Low complexity predominate over residues 127-144 (SPPRAISPTATSPPSSSA). Positions 906–909 (NPAY) match the NPXY motif motif. Phosphotyrosine is present on Tyr-909. Disordered stretches follow at residues 945-964 (RVTG…DFTE) and 985-1035 (SSAA…LSGK). The span at 1011 to 1025 (HSSNSSLQLQSHKNN) shows a compositional bias: low complexity. One can recognise an SAM domain in the interval 1163 to 1226 (GAPETVRELL…ILENLPKIWD (64 aa)).

The protein belongs to the inositol 1,4,5-trisphosphate 5-phosphatase family. Tyrosine phosphorylated by the members of the SRC family after exposure to a diverse array of extracellular stimuli.

The protein resides in the cytoplasm. The protein localises to the cytosol. It is found in the cytoskeleton. Its subcellular location is the membrane. It localises to the cell projection. The protein resides in the filopodium. The protein localises to the lamellipodium. It is found in the nucleus. Its subcellular location is the nucleus speckle. The catalysed reaction is a 1,2-diacyl-sn-glycero-3-phospho-(1D-myo-inositol-3,4,5-trisphosphate) + H2O = a 1,2-diacyl-sn-glycero-3-phospho-(1D-myo-inositol-3,4-bisphosphate) + phosphate. In terms of biological role, phosphatidylinositol (PtdIns) phosphatase that specifically hydrolyzes the 5-phosphate of phosphatidylinositol-3,4,5-trisphosphate (PtdIns(3,4,5)P3) to produce PtdIns(3,4)P2, thereby negatively regulating the PI3K (phosphoinositide 3-kinase) pathways. Plays a central role in regulation of PI3K-dependent insulin signaling, although the precise molecular mechanisms and signaling pathways remain unclear. Part of a signaling pathway that regulates actin cytoskeleton remodeling. Required for the maintenance and dynamic remodeling of actin structures as well as in endocytosis, having a major impact on ligand-induced EGFR internalization and degradation. Participates in regulation of cortical and submembraneous actin. Regulates cell adhesion and cell spreading. Acts as a negative regulator of the FC-gamma-RIIA receptor (FCGR2A). Mediates signaling from the FC-gamma-RIIB receptor (FCGR2B), playing a central role in terminating signal transduction from activating immune/hematopoietic cell receptor systems. May also hydrolyze PtdIns(1,3,4,5)P4, and could thus affect the levels of the higher inositol polyphosphates like InsP6. The sequence is that of Phosphatidylinositol 3,4,5-trisphosphate 5-phosphatase 2B (inppl1b) from Danio rerio (Zebrafish).